A 546-amino-acid polypeptide reads, in one-letter code: uncharacterized protein (546 aa).

The SLH domain maps to 52–123 (SVAELRDVQP…NTIEQLLQEN (72 aa)).

The protein belongs to the OprB family.

This is an uncharacterized protein from Synechocystis sp. (strain ATCC 27184 / PCC 6803 / Kazusa).